The primary structure comprises 305 residues: MIKQRTLKRIVQATGVGLHTGKKVTLTLRPAPANTGVIYRRTDLNPPVDFPADAKSVRDTMLCTCLVNEHDVRISTVEHLNAALAGLGIDNIIVEVDAPEIPIMDGSAAPFVYLLVDAGIDELNVAKKFVRIKETVRVEDGDKWAEFKPYNGFSLDFTIDFNHPAIDASNQRYCMNFSADAFMRQISRARTFGFMRDIEYLQSRGLCLGGSFDCAIVVDDYRVLNEDGLRFEDEFVRHKMLDAIGDLFMCGHNIIGAFTAYKSGHALNNKLLQAVLAKQEAWEYVTYEDEAELPLAFKAPSLVLA.

His79, His238, and Asp242 together coordinate Zn(2+). His265 serves as the catalytic Proton donor.

This sequence belongs to the LpxC family. Zn(2+) serves as cofactor.

It catalyses the reaction a UDP-3-O-[(3R)-3-hydroxyacyl]-N-acetyl-alpha-D-glucosamine + H2O = a UDP-3-O-[(3R)-3-hydroxyacyl]-alpha-D-glucosamine + acetate. The protein operates within glycolipid biosynthesis; lipid IV(A) biosynthesis; lipid IV(A) from (3R)-3-hydroxytetradecanoyl-[acyl-carrier-protein] and UDP-N-acetyl-alpha-D-glucosamine: step 2/6. In terms of biological role, catalyzes the hydrolysis of UDP-3-O-myristoyl-N-acetylglucosamine to form UDP-3-O-myristoylglucosamine and acetate, the committed step in lipid A biosynthesis. This chain is UDP-3-O-acyl-N-acetylglucosamine deacetylase, found in Cronobacter sakazakii (strain ATCC BAA-894) (Enterobacter sakazakii).